Consider the following 511-residue polypeptide: Bifunctional purine biosynthesis protein PurH (511 aa).

Residues 1 to 145 enclose the MGS-like domain; it reads MKKRALVSVS…KNHKFVSVIV (145 aa).

Belongs to the PurH family.

The enzyme catalyses (6R)-10-formyltetrahydrofolate + 5-amino-1-(5-phospho-beta-D-ribosyl)imidazole-4-carboxamide = 5-formamido-1-(5-phospho-D-ribosyl)imidazole-4-carboxamide + (6S)-5,6,7,8-tetrahydrofolate. The catalysed reaction is IMP + H2O = 5-formamido-1-(5-phospho-D-ribosyl)imidazole-4-carboxamide. Its pathway is purine metabolism; IMP biosynthesis via de novo pathway; 5-formamido-1-(5-phospho-D-ribosyl)imidazole-4-carboxamide from 5-amino-1-(5-phospho-D-ribosyl)imidazole-4-carboxamide (10-formyl THF route): step 1/1. It functions in the pathway purine metabolism; IMP biosynthesis via de novo pathway; IMP from 5-formamido-1-(5-phospho-D-ribosyl)imidazole-4-carboxamide: step 1/1. The chain is Bifunctional purine biosynthesis protein PurH from Bacillus cereus (strain 03BB102).